The chain runs to 201 residues: ATP-dependent Clp protease proteolytic subunit 2 (201 aa).

The active-site Nucleophile is S100. The active site involves H125.

This sequence belongs to the peptidase S14 family. As to quaternary structure, fourteen ClpP subunits assemble into 2 heptameric rings which stack back to back to give a disk-like structure with a central cavity, resembling the structure of eukaryotic proteasomes.

The protein resides in the cytoplasm. The catalysed reaction is Hydrolysis of proteins to small peptides in the presence of ATP and magnesium. alpha-casein is the usual test substrate. In the absence of ATP, only oligopeptides shorter than five residues are hydrolyzed (such as succinyl-Leu-Tyr-|-NHMec, and Leu-Tyr-Leu-|-Tyr-Trp, in which cleavage of the -Tyr-|-Leu- and -Tyr-|-Trp bonds also occurs).. Cleaves peptides in various proteins in a process that requires ATP hydrolysis. Has a chymotrypsin-like activity. Plays a major role in the degradation of misfolded proteins. This chain is ATP-dependent Clp protease proteolytic subunit 2, found in Corynebacterium glutamicum (strain ATCC 13032 / DSM 20300 / JCM 1318 / BCRC 11384 / CCUG 27702 / LMG 3730 / NBRC 12168 / NCIMB 10025 / NRRL B-2784 / 534).